Consider the following 421-residue polypeptide: ATP-dependent RNA helicase RhlB (421 aa).

Positions 9 to 37 match the Q motif motif; the sequence is QKFSDFALHPAVIEALEKKGFHNCTPIQA. The Helicase ATP-binding domain maps to 40–219; it reads LPLTLEGRDV…FEQMNNAEYV (180 aa). 53–60 is an ATP binding site; the sequence is AQTGTGKT. Residues 165-168 carry the DEAD box motif; it reads DEAD. The Helicase C-terminal domain occupies 245–390; the sequence is RLLQTLLEEE…VSKYNPDALM (146 aa). The segment at 396–421 is disordered; that stretch reads PLRLTRARPGNGPRRNGPPRNRRRSG. Over residues 403 to 414 the composition is skewed to low complexity; that stretch reads RPGNGPRRNGPP.

Belongs to the DEAD box helicase family. RhlB subfamily. Component of the RNA degradosome, which is a multiprotein complex involved in RNA processing and mRNA degradation.

Its subcellular location is the cytoplasm. The catalysed reaction is ATP + H2O = ADP + phosphate + H(+). Functionally, DEAD-box RNA helicase involved in RNA degradation. Has RNA-dependent ATPase activity and unwinds double-stranded RNA. The chain is ATP-dependent RNA helicase RhlB from Klebsiella pneumoniae (strain 342).